Here is a 144-residue protein sequence, read N- to C-terminus: Large ribosomal subunit protein uL16 (144 aa).

Belongs to the universal ribosomal protein uL16 family. Part of the 50S ribosomal subunit.

Functionally, binds 23S rRNA and is also seen to make contacts with the A and possibly P site tRNAs. This is Large ribosomal subunit protein uL16 from Clostridium beijerinckii (strain ATCC 51743 / NCIMB 8052) (Clostridium acetobutylicum).